The following is a 557-amino-acid chain: Aerobic glycerol-3-phosphate dehydrogenase (557 aa).

21 to 49 (DVVIVGGGITGAGIALDASNRGMKVALVE) lines the FAD pocket.

Belongs to the FAD-dependent glycerol-3-phosphate dehydrogenase family. FAD is required as a cofactor.

The protein localises to the cytoplasm. It catalyses the reaction a quinone + sn-glycerol 3-phosphate = dihydroxyacetone phosphate + a quinol. The protein operates within polyol metabolism; glycerol degradation via glycerol kinase pathway; glycerone phosphate from sn-glycerol 3-phosphate (aerobic route): step 1/1. In Staphylococcus epidermidis (strain ATCC 35984 / DSM 28319 / BCRC 17069 / CCUG 31568 / BM 3577 / RP62A), this protein is Aerobic glycerol-3-phosphate dehydrogenase (glpD).